Reading from the N-terminus, the 519-residue chain is 2,3-bisphosphoglycerate-independent phosphoglycerate mutase (519 aa).

Asp-18 and Ser-68 together coordinate Mn(2+). The Phosphoserine intermediate role is filled by Ser-68. Residues His-129, 159-160 (RD), Arg-191, Arg-197, 267-270 (RADR), and Lys-341 each bind substrate. Mn(2+) contacts are provided by Asp-408, His-412, Asp-449, His-450, and His-468.

The protein belongs to the BPG-independent phosphoglycerate mutase family. Monomer. Mn(2+) is required as a cofactor.

It carries out the reaction (2R)-2-phosphoglycerate = (2R)-3-phosphoglycerate. It participates in carbohydrate degradation; glycolysis; pyruvate from D-glyceraldehyde 3-phosphate: step 3/5. In terms of biological role, catalyzes the interconversion of 2-phosphoglycerate and 3-phosphoglycerate. In Coxiella burnetii (strain RSA 493 / Nine Mile phase I), this protein is 2,3-bisphosphoglycerate-independent phosphoglycerate mutase.